A 508-amino-acid polypeptide reads, in one-letter code: MVSNIGIRPAEISSIIRKKIEEYDQEVKIVNIGTVLQVGDGIARIYGLDQVMAGELLEFEDNTVGIALNLESDNVGAVLMGEGLTIQEGSSVKATGKIAQIPVGDSYLGRVVNALARPIDGKGDIDTSESRLIESPAPGIISRRSVYEPMQTGLIAIDSMIPIGRGQRELIIGDRQTGKTAVAVDTILNQKGQDVICVYVAIGQKASSVAQVVNTFEDRSALSYTIVVAETANSSATLQYLAPYTGASLAEYFMYKGRHTLVVYDDLSKQAQAYRQMSLLLRRPPGREAYPGDVFYLHSRLLERAAKLSSQLGEGSMTALPIVETQAGDVSAYIPTNVISITDGQIFLSADLFNAGIRPAINVGISVSRVGSAAQIKAMKQVAGKLKLELAQFAELEAFAQFASDLDKATQNQLARGQRLRELLKQAQSSPLSVEEQVATIYTGINGYLDKLETQQVRKFLTEFRIYLSSNKLEFIEILKSTKTFTDKAETKLKEALHEFTEEFLTSA.

173-180 (GDRQTGKT) is an ATP binding site.

Belongs to the ATPase alpha/beta chains family. F-type ATPases have 2 components, CF(1) - the catalytic core - and CF(0) - the membrane proton channel. CF(1) has five subunits: alpha(3), beta(3), gamma(1), delta(1), epsilon(1). CF(0) has four main subunits: a, b, b' and c.

The protein resides in the plastid. Its subcellular location is the chloroplast thylakoid membrane. It carries out the reaction ATP + H2O + 4 H(+)(in) = ADP + phosphate + 5 H(+)(out). Produces ATP from ADP in the presence of a proton gradient across the membrane. The alpha chain is a regulatory subunit. In Chara vulgaris (Common stonewort), this protein is ATP synthase subunit alpha, chloroplastic.